The primary structure comprises 315 residues: S-methyl-5'-thioadenosine phosphorylase (315 aa).

Phosphate-binding positions include Ser-22, 65–66, and 98–99; these read RH and SA. Met-205 provides a ligand contact to substrate. Position 206 (Ser-206) interacts with phosphate. Residue 229-231 coordinates substrate; that stretch reads DYD.

Belongs to the PNP/MTAP phosphorylase family. MTAP subfamily. Homotrimer.

Its subcellular location is the cytoplasm. It is found in the nucleus. The catalysed reaction is S-methyl-5'-thioadenosine + phosphate = 5-(methylsulfanyl)-alpha-D-ribose 1-phosphate + adenine. The protein operates within amino-acid biosynthesis; L-methionine biosynthesis via salvage pathway; S-methyl-5-thio-alpha-D-ribose 1-phosphate from S-methyl-5'-thioadenosine (phosphorylase route): step 1/1. Functionally, catalyzes the reversible phosphorylation of S-methyl-5'-thioadenosine (MTA) to adenine and 5-methylthioribose-1-phosphate. Involved in the breakdown of MTA, a major by-product of polyamine biosynthesis. Responsible for the first step in the methionine salvage pathway after MTA has been generated from S-adenosylmethionine. Has broad substrate specificity with 6-aminopurine nucleosides as preferred substrates. In Mycosarcoma maydis (Corn smut fungus), this protein is S-methyl-5'-thioadenosine phosphorylase.